A 316-amino-acid polypeptide reads, in one-letter code: Malate dehydrogenase (316 aa).

NAD(+) contacts are provided by residues 12–17 (GAGNIG) and Asp-36. Substrate contacts are provided by Arg-85 and Arg-91. Residues Asn-98 and 121-123 (VTN) each bind NAD(+). Positions 123 and 154 each coordinate substrate. His-178 (proton acceptor) is an active-site residue.

Belongs to the LDH/MDH superfamily. MDH type 3 family.

The catalysed reaction is (S)-malate + NAD(+) = oxaloacetate + NADH + H(+). Its function is as follows. Catalyzes the reversible oxidation of malate to oxaloacetate. This is Malate dehydrogenase from Wolbachia sp. subsp. Brugia malayi (strain TRS).